Reading from the N-terminus, the 147-residue chain is Large ribosomal subunit protein uL13 (147 aa).

Residues 128 to 147 are disordered; the sequence is DQHPHGAQQPQPFEITQVAQ.

This sequence belongs to the universal ribosomal protein uL13 family. In terms of assembly, part of the 50S ribosomal subunit.

Its function is as follows. This protein is one of the early assembly proteins of the 50S ribosomal subunit, although it is not seen to bind rRNA by itself. It is important during the early stages of 50S assembly. The protein is Large ribosomal subunit protein uL13 of Streptomyces coelicolor (strain ATCC BAA-471 / A3(2) / M145).